Here is a 246-residue protein sequence, read N- to C-terminus: E3 ubiquitin-protein ligase MARCHF2 (246 aa).

The RING-CH-type zinc finger occupies 56-116; sequence DTPSDCPFCR…ELCHTEFAVE (61 aa). Zn(2+) contacts are provided by C64, C67, C80, C82, H90, C93, C106, and C109. Residues 121–246 are required for interaction with IKBKG; sequence PLTEWLKDPG…LKKVAEETPV (126 aa). The next 2 membrane-spanning stretches (helical) occupy residues 138–158 and 175–195; these read LCCD…SGWL and AVGL…WTLV.

In terms of assembly, interacts with STX6; the interaction promotes MARCHF2-mediated ubiquitination and degradation of CFTR. Interacts with MARCHF3. Interacts with GOPC/CAL; the interaction leads to CFTR ubiquitination and degradation. Interacts with CFTR; the interaction leads to CFTR ubiqtuitination and degradation. Interacts (via PDZ domain) with DLG1 (via PDZ domains); the interaction leads to DLG1 ubiqtuitination and degradation. Interacts with ERGIC3. Interacts with ADRB2. Interacts with IKBKG/NEMO; during the late stages of macrophage viral and bacterial infection; the interaction leads to ubiquitination and degradation of IKBKG/NEMO. As to expression, ubiquitously expressed. Present in liver (at protein level).

Its subcellular location is the endoplasmic reticulum membrane. It is found in the lysosome membrane. The protein localises to the endosome membrane. The protein resides in the golgi apparatus membrane. It localises to the cytoplasm. Its subcellular location is the cell membrane. The enzyme catalyses S-ubiquitinyl-[E2 ubiquitin-conjugating enzyme]-L-cysteine + [acceptor protein]-L-lysine = [E2 ubiquitin-conjugating enzyme]-L-cysteine + N(6)-ubiquitinyl-[acceptor protein]-L-lysine.. It participates in protein modification; protein ubiquitination. Its function is as follows. E3 ubiquitin-protein ligase that may mediate ubiquitination of TFRC and CD86, and promote their subsequent endocytosis and sorting to lysosomes via multivesicular bodies. E3 ubiquitin ligases accept ubiquitin from an E2 ubiquitin-conjugating enzyme in the form of a thioester and then directly transfer the ubiquitin to targeted substrates. Together with GOPC/CAL mediates the ubiquitination and lysosomal degradation of CFTR. Ubiquitinates and therefore mediates the degradation of DLG1. Regulates the intracellular trafficking and secretion of alpha1-antitrypsin/SERPINA1 and HP/haptoglobin via ubiquitination and degradation of the cargo receptor ERGIC3. Negatively regulates the antiviral and antibacterial immune response by repression of the NF-kB and type 1 IFN signaling pathways, via MARCHF2-mediated K48-linked polyubiquitination of IKBKG/NEMO, resulting in its proteasomal degradation. May be involved in endosomal trafficking through interaction with STX6. The sequence is that of E3 ubiquitin-protein ligase MARCHF2 (Marchf2) from Rattus norvegicus (Rat).